Consider the following 184-residue polypeptide: Fe/S biogenesis protein NfuA (184 aa).

[4Fe-4S] cluster-binding residues include cysteine 142 and cysteine 145.

It belongs to the NfuA family. In terms of assembly, homodimer. The cofactor is [4Fe-4S] cluster.

Functionally, involved in iron-sulfur cluster biogenesis. Binds a 4Fe-4S cluster, can transfer this cluster to apoproteins, and thereby intervenes in the maturation of Fe/S proteins. Could also act as a scaffold/chaperone for damaged Fe/S proteins. The sequence is that of Fe/S biogenesis protein NfuA from Wigglesworthia glossinidia brevipalpis.